Reading from the N-terminus, the 415-residue chain is Glucose-1-phosphate adenylyltransferase (415 aa).

Alpha-D-glucose 1-phosphate-binding positions include Tyr100, Gly165, 182–183, and Ser200; that span reads EK.

The protein belongs to the bacterial/plant glucose-1-phosphate adenylyltransferase family. As to quaternary structure, homotetramer.

It carries out the reaction alpha-D-glucose 1-phosphate + ATP + H(+) = ADP-alpha-D-glucose + diphosphate. It participates in glycan biosynthesis; glycogen biosynthesis. Involved in the biosynthesis of ADP-glucose, a building block required for the elongation reactions to produce glycogen. Catalyzes the reaction between ATP and alpha-D-glucose 1-phosphate (G1P) to produce pyrophosphate and ADP-Glc. This Bifidobacterium animalis subsp. lactis (strain AD011) protein is Glucose-1-phosphate adenylyltransferase.